The primary structure comprises 638 residues: Methylmalonyl-CoA mutase small subunit (638 aa).

Polar residues predominate over residues 1 to 11; that stretch reads MSSTDQGTNPA. Residues 1–34 form a disordered region; that stretch reads MSSTDQGTNPADTDDLTPTTLSLAGDFPKATEEQ.

The protein belongs to the methylmalonyl-CoA mutase family. Heterodimer of an alpha and a beta chain. It depends on adenosylcob(III)alamin as a cofactor.

The catalysed reaction is (R)-methylmalonyl-CoA = succinyl-CoA. The protein operates within metabolic intermediate metabolism; propanoyl-CoA degradation; succinyl-CoA from propanoyl-CoA: step 3/3. In terms of biological role, catalyzes the isomerization of succinyl-CoA to methylmalonyl-CoA during synthesis of propionate from tricarboxylic acid-cycle intermediates. The protein is Methylmalonyl-CoA mutase small subunit (mutA) of Propionibacterium freudenreichii subsp. shermanii.